Reading from the N-terminus, the 344-residue chain is Methionine import ATP-binding protein MetN (344 aa).

An ABC transporter domain is found at 2 to 241 (IEIRNLSQRF…PHHEVTRALI (240 aa)). Position 38–45 (38–45 (GRSGAGKS)) interacts with ATP.

It belongs to the ABC transporter superfamily. Methionine importer (TC 3.A.1.24) family. In terms of assembly, the complex is composed of two ATP-binding proteins (MetN), two transmembrane proteins (MetI) and a solute-binding protein (MetQ).

It localises to the cell inner membrane. The catalysed reaction is L-methionine(out) + ATP + H2O = L-methionine(in) + ADP + phosphate + H(+). It catalyses the reaction D-methionine(out) + ATP + H2O = D-methionine(in) + ADP + phosphate + H(+). Its function is as follows. Part of the ABC transporter complex MetNIQ involved in methionine import. Responsible for energy coupling to the transport system. The polypeptide is Methionine import ATP-binding protein MetN (Burkholderia thailandensis (strain ATCC 700388 / DSM 13276 / CCUG 48851 / CIP 106301 / E264)).